Here is a 124-residue protein sequence, read N- to C-terminus: Kinocilin (124 aa).

2 consecutive transmembrane segments (helical) span residues Leu-13 to Val-33 and Met-40 to Leu-60. A disordered region spans residues Pro-80–Cys-124. Residues Arg-90 to Arg-109 show a composition bias toward polar residues. The span at Thr-110 to Cys-124 shows a compositional bias: basic and acidic residues.

The protein localises to the membrane. Its function is as follows. May play a role in stabilizing dense microtubular networks or in vesicular trafficking. The protein is Kinocilin (KNCN) of Homo sapiens (Human).